The chain runs to 248 residues: Positive alginate biosynthesis regulatory protein (248 aa).

The 116-residue stretch at 2–117 folds into the Response regulatory domain; that stretch reads NVLIVDDEPL…DLAEALKKAS (116 aa). Asp-54 is subject to 4-aspartylphosphate. The region spanning 142–247 is the HTH LytTR-type domain; that stretch reads ISARTRKGIE…VAGVRRLMHQ (106 aa).

Its pathway is glycan biosynthesis; alginate biosynthesis [regulation]. Its function is as follows. Positive regulator of the algD gene, which codes for a GDP-mannose dehydrogenase, a key step enzyme in the alginate biosynthesis pathway. This is Positive alginate biosynthesis regulatory protein (algR) from Pseudomonas aeruginosa (strain ATCC 15692 / DSM 22644 / CIP 104116 / JCM 14847 / LMG 12228 / 1C / PRS 101 / PAO1).